Here is a 719-residue protein sequence, read N- to C-terminus: Pesticidal crystal protein Cry1Id (719 aa).

This sequence belongs to the delta endotoxin family.

Promotes colloidosmotic lysis by binding to the midgut epithelial cells of many lepidopteran larvae. Active on Plutella xylostella and on Bombyx mori. In Bacillus thuringiensis, this protein is Pesticidal crystal protein Cry1Id (cry1Id).